Here is a 528-residue protein sequence, read N- to C-terminus: ADP,ATP carrier protein 1 (528 aa).

12 helical membrane-spanning segments follow: residues 24-44 (LKKVLPMFLMFFCISFNYTIL), 63-83 (IPFIKLWLVVPSAVVFMLIYA), 93-113 (ALFFAVLSPFVVFFALFPVVI), 124-144 (AFADTLQSILPSGFMGFIAML), 149-169 (FAVFYVLSELWGSVMLSLMFW), 184-204 (FYALFGVGANVALLISGPAII), 220-240 (WGVSLYFLMAMFLCSCAIIAA), 284-304 (YMLLLALLVICYGICINLVEV), 327-347 (FSFWTGVVSVFVMLFIGGNVI), 356-376 (ALVTPIMVLVTGAVFFALVIF), 381-401 (TGLVAALGTTPLMLAVVVGAI), and 463-483 (IGAMTPFLAVALFAIIMVWLT).

The protein belongs to the ADP/ATP translocase tlc family.

The protein localises to the cell membrane. In Chlamydia trachomatis serovar D (strain ATCC VR-885 / DSM 19411 / UW-3/Cx), this protein is ADP,ATP carrier protein 1 (tlcA).